Reading from the N-terminus, the 100-residue chain is NADH-quinone oxidoreductase subunit K 2 (100 aa).

The next 3 helical transmembrane spans lie at 2–22, 29–49, and 61–81; these read LAIE…TIGV, IVIF…FIAF, and FVFF…ALMI.

This sequence belongs to the complex I subunit 4L family. As to quaternary structure, NDH-1 is composed of 14 different subunits. Subunits NuoA, H, J, K, L, M, N constitute the membrane sector of the complex.

Its subcellular location is the cell inner membrane. The catalysed reaction is a quinone + NADH + 5 H(+)(in) = a quinol + NAD(+) + 4 H(+)(out). Functionally, NDH-1 shuttles electrons from NADH, via FMN and iron-sulfur (Fe-S) centers, to quinones in the respiratory chain. The immediate electron acceptor for the enzyme in this species is believed to be ubiquinone. Couples the redox reaction to proton translocation (for every two electrons transferred, four hydrogen ions are translocated across the cytoplasmic membrane), and thus conserves the redox energy in a proton gradient. In Geobacter sp. (strain M21), this protein is NADH-quinone oxidoreductase subunit K 2.